The sequence spans 75 residues: Sec-independent protein translocase protein TatA (75 aa).

A helical transmembrane segment spans residues 1–21; it reads MGMPSMPELLIVLAIVVLLFG. Residues 47-75 form a disordered region; the sequence is DEEEEVKEITKKEEPKVEAAAEEKKSENA. Residues 53–75 show a composition bias toward basic and acidic residues; that stretch reads KEITKKEEPKVEAAAEEKKSENA.

This sequence belongs to the TatA/E family. In terms of assembly, the Tat system comprises two distinct complexes: a TatABC complex, containing multiple copies of TatA, TatB and TatC subunits, and a separate TatA complex, containing only TatA subunits. Substrates initially bind to the TatABC complex, which probably triggers association of the separate TatA complex to form the active translocon.

The protein resides in the cell inner membrane. In terms of biological role, part of the twin-arginine translocation (Tat) system that transports large folded proteins containing a characteristic twin-arginine motif in their signal peptide across membranes. TatA could form the protein-conducting channel of the Tat system. This Sulfurovum sp. (strain NBC37-1) protein is Sec-independent protein translocase protein TatA.